The following is a 191-amino-acid chain: MAMQLSLSHQSWAKSLASPITSFDPARSPPKRVELGPNCLNGGATAGKLMREKVGERMRMSGRSCCVKASLETAVGAESETLVGKVTEVDKDTFWPIANGAGDKPVVLDMYTQWCGPCKVMAPKYQELAEKLLDVVFLKLDCNQENKPLAKELGIRVVPTFKILKGGKIVDEVTGAKFDKLVAAIEAARSS.

One can recognise a Thioredoxin domain in the interval 68-190; it reads KASLETAVGA…LVAAIEAARS (123 aa). Active-site nucleophile residues include C115 and C118. C115 and C118 form a disulfide bridge.

This sequence belongs to the thioredoxin family. Plant F-type subfamily. Forms a complex with heterodimeric ferredoxin-thioredoxin reductase (FTR) and ferredoxin.

The protein localises to the plastid. It is found in the chloroplast. Its function is as follows. Participates in various redox reactions through the reversible oxidation of the active center dithiol to a disulfide. The F form is known to activate a number of enzymes of the photosynthetic carbon cycle. The protein is Thioredoxin F-type, chloroplastic of Mesembryanthemum crystallinum (Common ice plant).